The sequence spans 202 residues: Cryptic protein (202 aa).

The signal sequence occupies residues 1–35 (MRANSPTQGISLKMHQARPLFLVTVALQLIGLGYS). An N-linked (GlcNAc...) asparagine glycan is attached at Asn65. The 30-residue stretch at 94–123 (PVSRCCHNGGTCVLGSFCVCPAYFTGRYCE) folds into the EGF-like domain. Cystine bridges form between Cys98-Cys105, Cys99-Cys111, and Cys113-Cys122. A lipid anchor (GPI-anchor amidated aspartate) is attached at Asp166. Residues 167-202 (LKSFLSSGARGSRECSIPSLLLLVLCLLLQGVAGKG) constitute a propeptide, removed in mature form.

Belongs to the EGF-CFC (Cripto-1/FRL1/Cryptic) family. N-glycosylated. As to expression, no expressed in adult tissues.

The protein resides in the cell membrane. Its subcellular location is the secreted. Functionally, nodal coreceptor involved in the correct establishment of the left-right axis. May play a role in mesoderm and/or neural patterning during gastrulation. The protein is Cryptic protein (Cfc1) of Mus musculus (Mouse).